The chain runs to 682 residues: Potassium-transporting ATPase ATP-binding subunit (682 aa).

4 helical membrane-spanning segments follow: residues 34 to 54 (PVMF…IAMA), 62 to 82 (ALFS…ANFA), 219 to 239 (IALT…TATL), and 254 to 274 (VLVA…LSAI). D307 (4-aspartylphosphate intermediate) is an active-site residue. ATP-binding positions include D344, E348, 377–384 (FTAQSRMS), and K395. The Mg(2+) site is built by D518 and D522. Helical transmembrane passes span 588-608 (FAII…LNIM), 616-636 (AILS…PLAL), and 656-676 (IYGL…DLLL).

It belongs to the cation transport ATPase (P-type) (TC 3.A.3) family. Type IA subfamily. As to quaternary structure, the system is composed of three essential subunits: KdpA, KdpB and KdpC.

Its subcellular location is the cell inner membrane. It catalyses the reaction K(+)(out) + ATP + H2O = K(+)(in) + ADP + phosphate + H(+). Functionally, part of the high-affinity ATP-driven potassium transport (or Kdp) system, which catalyzes the hydrolysis of ATP coupled with the electrogenic transport of potassium into the cytoplasm. This subunit is responsible for energy coupling to the transport system and for the release of the potassium ions to the cytoplasm. The chain is Potassium-transporting ATPase ATP-binding subunit from Escherichia coli O157:H7 (strain EC4115 / EHEC).